A 264-amino-acid chain; its full sequence is uncharacterized protein (264 aa).

Ile8 to Thr15 provides a ligand contact to ATP.

This is an uncharacterized protein from Methanocaldococcus jannaschii (strain ATCC 43067 / DSM 2661 / JAL-1 / JCM 10045 / NBRC 100440) (Methanococcus jannaschii).